The sequence spans 139 residues: Small ribosomal subunit protein uS12m (139 aa).

The transit peptide at 1–29 (MSWSGLLRGLSMSLNYGLALAPRPWGTRP) directs the protein to the mitochondrion. A disordered region spans residues 37-57 (HRRGPPKFPPSKPGPTEGRPQ).

This sequence belongs to the universal ribosomal protein uS12 family. As to quaternary structure, component of the mitochondrial ribosome small subunit (28S) which comprises a 12S rRNA and about 30 distinct proteins.

The protein resides in the mitochondrion. This Bos taurus (Bovine) protein is Small ribosomal subunit protein uS12m (MRPS12).